Reading from the N-terminus, the 265-residue chain is Insulin-like growth factor-binding protein 2-B (265 aa).

Positions 1-17 (MSLALLCSLLLVHGSLG) are cleaved as a signal peptide. The IGFBP N-terminal domain maps to 19-99 (IVFRCPSCTA…IQGLGRCENK (81 aa)). 6 disulfides stabilise this stretch: Cys-23–Cys-49, Cys-26–Cys-51, Cys-34–Cys-52, Cys-41–Cys-55, Cys-63–Cys-76, and Cys-70–Cys-96. Polar residues predominate over residues 107–122 (TNQESAAHSGEVNGTR). 2 disordered regions span residues 107–128 (TNQE…PMKK) and 144–170 (HHNN…SQCQ). The Thyroglobulin type-1 domain maps to 166–248 (QSQCQQELDK…SDKVRGDPNC (83 aa)). 3 cysteine pairs are disulfide-bonded: Cys-169–Cys-203, Cys-214–Cys-225, and Cys-227–Cys-248. Residues 238-265 (SSDKVRGDPNCSQYYGGPELEPPTAQQK) are disordered. The short motif at 243–245 (RGD) is the Cell attachment site element.

As to quaternary structure, interacts with igf2. Interacts with igf1. In terms of tissue distribution, in early embryos, expressed at a low level in most tissues with expression becoming abundant in the liver by 96 hours post-fertilization (hpf). The expression pattern in adults exhibits sexual dimorphism; in adult males expression is limited exclusively to the liver whereas in adult females expression is observed in the liver and other tissues including the gut, kidney, ovary and muscle.

Its subcellular location is the secreted. IGF-binding proteins prolong the half-life of the IGFs and have been shown to either inhibit or stimulate the growth promoting effects of the IGFs on cell culture. They alter the interaction of IGFs with their cell surface receptors. This Danio rerio (Zebrafish) protein is Insulin-like growth factor-binding protein 2-B.